Consider the following 136-residue polypeptide: Large ribosomal subunit protein bL21 (136 aa).

The interval 107–136 (RAAADRKTAPKRASAKAAADQTTAAQATAE) is disordered. Residues 121–136 (AKAAADQTTAAQATAE) show a composition bias toward low complexity.

Belongs to the bacterial ribosomal protein bL21 family. As to quaternary structure, part of the 50S ribosomal subunit. Contacts protein L20.

In terms of biological role, this protein binds to 23S rRNA in the presence of protein L20. The polypeptide is Large ribosomal subunit protein bL21 (Acidothermus cellulolyticus (strain ATCC 43068 / DSM 8971 / 11B)).